We begin with the raw amino-acid sequence, 108 residues long: Complement inhibitor CirpT2 (108 aa).

Positions 1–19 are cleaved as a signal peptide; the sequence is MRTLVASLCVFAVFSAVCC. 4 disulfide bridges follow: Cys-40/Cys-64, Cys-59/Cys-98, Cys-76/Cys-99, and Cys-85/Cys-104.

This sequence belongs to the CirpT family. Expressed in salivary glands.

It is found in the secreted. Its function is as follows. Complement inhibitor. Prevents complement-mediated activation of C5 by sterically preventing direct binding of C5 to its convertase (binding with domains MG4 and MG5). Binds C5 at a different binding site than the other tick complement inhibitors OmCI and RaCI3, and the drug eculizumab. Inhibits the complement in human, rat and guinea pig, and also shows a reduced inhibition in rabbit and pig. This chain is Complement inhibitor CirpT2, found in Dermacentor andersoni (Rocky mountain wood tick).